Here is a 101-residue protein sequence, read N- to C-terminus: Small ribosomal subunit protein uS10 (101 aa).

Belongs to the universal ribosomal protein uS10 family. In terms of assembly, part of the 30S ribosomal subunit.

Its function is as follows. Involved in the binding of tRNA to the ribosomes. The sequence is that of Small ribosomal subunit protein uS10 from Parabacteroides distasonis (strain ATCC 8503 / DSM 20701 / CIP 104284 / JCM 5825 / NCTC 11152).